The primary structure comprises 338 residues: Biotin synthase (338 aa).

Residues 59–284 form the Radical SAM core domain; it reads EEVEIEGIVS…RTTLRFAGGR (226 aa). Residues Cys74, Cys78, and Cys81 each contribute to the [4Fe-4S] cluster site. The [2Fe-2S] cluster site is built by Cys117, Cys209, and Arg279.

The protein belongs to the radical SAM superfamily. Biotin synthase family. As to quaternary structure, homodimer. It depends on [4Fe-4S] cluster as a cofactor. [2Fe-2S] cluster serves as cofactor.

It catalyses the reaction (4R,5S)-dethiobiotin + (sulfur carrier)-SH + 2 reduced [2Fe-2S]-[ferredoxin] + 2 S-adenosyl-L-methionine = (sulfur carrier)-H + biotin + 2 5'-deoxyadenosine + 2 L-methionine + 2 oxidized [2Fe-2S]-[ferredoxin]. It functions in the pathway cofactor biosynthesis; biotin biosynthesis; biotin from 7,8-diaminononanoate: step 2/2. In terms of biological role, catalyzes the conversion of dethiobiotin (DTB) to biotin by the insertion of a sulfur atom into dethiobiotin via a radical-based mechanism. The chain is Biotin synthase from Corynebacterium urealyticum (strain ATCC 43042 / DSM 7109).